The primary structure comprises 831 residues: SID1 transmembrane family member 1 (831 aa).

The N-terminal stretch at 1 to 19 (MLDCPRLALLCALPWLLRA) is a signal peptide. Residues 20–308 (AVPGHRAEPL…SVKGSVYVKS (289 aa)) lie on the Extracellular side of the membrane. 4 N-linked (GlcNAc...) asparagine glycosylation sites follow: Asn67, Asn83, Asn136, and Asn281. The chain crosses the membrane as a helical span at residues 309-329 (SLFSVFVFLSFYLGCLLVVFV). The Cytoplasmic segment spans residues 330–441 (HHMRFQRKPV…DRRIVSKKYK (112 aa)). The disordered stretch occupies residues 354 to 408 (VSHPITASTPEGSNYGAIDESSSSPGRQMSSSDGGQPCHSDTDSSVEESDFDTMP). Residues 374–385 (SSSSPGRQMSSS) are compositionally biased toward low complexity. Over residues 397–408 (SSVEESDFDTMP) the composition is skewed to acidic residues. A helical membrane pass occupies residues 442 to 462 (IYFWNIITIAVFYALPVMQLV). Over 463–493 (ITYQTVVNVTGNQDICYYNFLCAHPLGVLSA) the chain is Extracellular. The N-linked (GlcNAc...) asparagine glycan is linked to Asn470. A helical membrane pass occupies residues 494–514 (FNNILSNLGHVLLGFLFLLIV). At 515–540 (LRRDLLHRRALEAKDIFAMEYGIPKH) the chain is on the cytoplasmic side. A helical transmembrane segment spans residues 541-561 (FGLFYAMGIALMMEGVLSACY). The Extracellular segment spans residues 562 to 571 (HVCPNYSNFQ). A glycan (N-linked (GlcNAc...) asparagine) is linked at Asn566. A helical membrane pass occupies residues 572–589 (FDTSFMYMIAGLCMLKLY). Topologically, residues 590 to 599 (QTRHPDINAS) are cytoplasmic. The chain crosses the membrane as a helical span at residues 600-620 (AYSAYASFAVVITLTVLGVVF). The Extracellular segment spans residues 621–625 (GKNDV). The helical transmembrane segment at 626–646 (WFWIIFSAIHVLASLALSTQI) threads the bilayer. The Cytoplasmic portion of the chain corresponds to 647-687 (YYMGRFKIDVSDTDLGIFRRAAMVFYTDCIQQCSRPLYMDR). Residues 688–708 (MVLLIVGNLVNWSFALFGLIY) form a helical membrane-spanning segment. Residues 709–714 (RPRDFA) are Extracellular-facing. A helical transmembrane segment spans residues 715 to 735 (SYMLGIFICNLLLYLAFYIIM). Residues 736 to 745 (KLRSSEKVLP) are Cytoplasmic-facing. The chain crosses the membrane as a helical span at residues 746–766 (LPVFCIVATAVVWAAALYFFF). The Extracellular portion of the chain corresponds to 767–795 (QNLSSWEGTPAESREKNRECVLLGFFDDH). Residue Asn768 is glycosylated (N-linked (GlcNAc...) asparagine). The helical transmembrane segment at 796–816 (DIWHFLSATALFFSFLVLLTL) threads the bilayer. Residues 817 to 831 (DDDLDVVRRDQIPVF) lie on the Cytoplasmic side of the membrane.

Belongs to the SID1 family.

The protein resides in the membrane. Functionally, in vitro binds long double-stranded RNA (dsRNA) (500 and 700 base pairs), but not dsRNA shorter than 300 bp. Not involved in RNA autophagy, a process in which RNA is directly imported into lysosomes in an ATP-dependent manner, and degraded. This Rattus norvegicus (Rat) protein is SID1 transmembrane family member 1 (Sidt1).